The sequence spans 206 residues: Macrophage immunometabolism regulator (206 aa).

Residue methionine 1 is modified to N-acetylmethionine. Positions 1–41 (MEVDINGESRSTLTTLPFPGAEANSPGKAEAEKPRCSSTPC) are disordered. Phosphoserine is present on residues serine 25, serine 140, and serine 167.

Belongs to the UNC119-binding protein family. In terms of assembly, interacts with UNC119 and UNC119B; interaction preferentially takes place when UNC119 and UNC119B are unliganded with myristoylated proteins. Post-translationally, phosphorylated. High expression in normal macrophages, monocytes, and cultured rheumatoid arthritis synovial fibroblasts (RASFs), with lower expression in B- and T-cells, and little to no expression in other tissues and cell lines.

The protein localises to the cytoplasm. It is found in the cell projection. The protein resides in the cilium. Its function is as follows. Regulates the macrophage function, by enhancing the resolution of inflammation and wound repair functions mediated by M2 macrophages. The regulation of macrophage function is, due at least in part, to its ability to inhibit glycolysis. May also play a role in trafficking of proteins via its interaction with UNC119 and UNC119B cargo adapters: may help the release of UNC119 and UNC119B cargo or the recycling of UNC119 and UNC119B. May play a role in ciliary membrane localization via its interaction with UNC119B and protein transport into photoreceptor cells. The chain is Macrophage immunometabolism regulator from Homo sapiens (Human).